The chain runs to 352 residues: Selenide, water dikinase (352 aa).

C23 is a catalytic residue. ATP contacts are provided by residues K26 and 54–56 (SRD). D57 lines the Mg(2+) pocket. ATP is bound by residues D74, D97, and 145–147 (GHS). Residue D97 coordinates Mg(2+). Residue D233 coordinates Mg(2+).

Belongs to the selenophosphate synthase 1 family. Class I subfamily. Homodimer. Requires Mg(2+) as cofactor.

The enzyme catalyses hydrogenselenide + ATP + H2O = selenophosphate + AMP + phosphate + 2 H(+). Synthesizes selenophosphate from selenide and ATP. In Shewanella putrefaciens (strain CN-32 / ATCC BAA-453), this protein is Selenide, water dikinase.